Reading from the N-terminus, the 65-residue chain is MPKMKTNSGSKKRFTLTGTGKIKRKHAFHSHILTKKSKKRKRNLCYSTTVDTTNVSQVKELLAMK.

Residues methionine 1–glycine 20 form a disordered region.

Belongs to the bacterial ribosomal protein bL35 family.

This Bacteroides thetaiotaomicron (strain ATCC 29148 / DSM 2079 / JCM 5827 / CCUG 10774 / NCTC 10582 / VPI-5482 / E50) protein is Large ribosomal subunit protein bL35.